Here is an 883-residue protein sequence, read N- to C-terminus: Phosphoenolpyruvate carboxylase (883 aa).

Active-site residues include H138 and K546.

It belongs to the PEPCase type 1 family. Mg(2+) serves as cofactor.

The catalysed reaction is oxaloacetate + phosphate = phosphoenolpyruvate + hydrogencarbonate. Its function is as follows. Forms oxaloacetate, a four-carbon dicarboxylic acid source for the tricarboxylic acid cycle. This chain is Phosphoenolpyruvate carboxylase, found in Salmonella arizonae (strain ATCC BAA-731 / CDC346-86 / RSK2980).